The primary structure comprises 255 residues: Poxin (255 aa).

The protein belongs to the poxin family. Highly divergent.

It catalyses the reaction 2',3'-cGAMP + H2O = Gp(2'-5')Ap(3') + H(+). Nuclease that cleaves 2',3'-cGAMP. The sequence is that of Poxin from Bombyx mori (Silk moth).